Reading from the N-terminus, the 118-residue chain is Beta-2-microglobulin (118 aa).

A signal peptide spans 1-21 (MESRWGIVVIGLLCCVSWVEA). Positions 26–113 (PKIQVYTRSP…THNSVTKSVK (88 aa)) constitute an Ig-like C1-type domain. Cys-46 and Cys-101 are joined by a disulfide.

Belongs to the beta-2-microglobulin family. Heterodimer of an alpha chain and a beta chain. Beta-2-microglobulin is the beta-chain of major histocompatibility complex class I molecules.

Its subcellular location is the secreted. Its function is as follows. Component of the class I major histocompatibility complex (MHC). Involved in the presentation of peptide antigens to the immune system. This is Beta-2-microglobulin (B2M) from Tachyglossus aculeatus aculeatus (Southeast Australian short-beaked echidna).